A 327-amino-acid polypeptide reads, in one-letter code: GMP reductase (327 aa).

Residue C175 is the Thioimidate intermediate of the active site. 204 to 227 (IIADGGIRTNGDVAKSIRFGATMV) serves as a coordination point for NADP(+).

The protein belongs to the IMPDH/GMPR family. GuaC type 2 subfamily.

It catalyses the reaction IMP + NH4(+) + NADP(+) = GMP + NADPH + 2 H(+). Functionally, catalyzes the irreversible NADPH-dependent deamination of GMP to IMP. It functions in the conversion of nucleobase, nucleoside and nucleotide derivatives of G to A nucleotides, and in maintaining the intracellular balance of A and G nucleotides. The chain is GMP reductase from Bacillus anthracis.